The primary structure comprises 260 residues: tRNA1(Val) (adenine(37)-N6)-methyltransferase (260 aa).

This sequence belongs to the methyltransferase superfamily. tRNA (adenine-N(6)-)-methyltransferase family.

It localises to the cytoplasm. The enzyme catalyses adenosine(37) in tRNA1(Val) + S-adenosyl-L-methionine = N(6)-methyladenosine(37) in tRNA1(Val) + S-adenosyl-L-homocysteine + H(+). Functionally, specifically methylates the adenine in position 37 of tRNA(1)(Val) (anticodon cmo5UAC). The chain is tRNA1(Val) (adenine(37)-N6)-methyltransferase from Serratia proteamaculans (strain 568).